A 221-amino-acid polypeptide reads, in one-letter code: Uracil-DNA glycosylase 1 (221 aa).

D61 (proton acceptor) is an active-site residue.

The protein belongs to the uracil-DNA glycosylase (UDG) superfamily. UNG family.

The protein resides in the cytoplasm. The catalysed reaction is Hydrolyzes single-stranded DNA or mismatched double-stranded DNA and polynucleotides, releasing free uracil.. Functionally, excises uracil residues from the DNA which can arise as a result of misincorporation of dUMP residues by DNA polymerase or due to deamination of cytosine. The sequence is that of Uracil-DNA glycosylase 1 from Listeria monocytogenes serotype 4b (strain F2365).